Consider the following 488-residue polypeptide: UDP-glycosyltransferase 92A1 (488 aa).

Residues Ser292, 358-360 (APQ), 375-383 (HCGWNSILE), and 397-400 (AAEQ) each bind UDP-alpha-D-glucose.

This sequence belongs to the UDP-glycosyltransferase family.

This is UDP-glycosyltransferase 92A1 (UGT92A1) from Arabidopsis thaliana (Mouse-ear cress).